The following is a 335-amino-acid chain: Glyceraldehyde-3-phosphate dehydrogenase (335 aa).

NAD(+) contacts are provided by residues 13-14 (TI) and glycine 111. 140 to 142 (SCN) serves as a coordination point for D-glyceraldehyde 3-phosphate. Residue cysteine 141 is the Nucleophile of the active site. Residue arginine 169 coordinates NAD(+). Residues threonine 171 and 195-196 (HG) contribute to the D-glyceraldehyde 3-phosphate site. Residue glutamine 300 coordinates NAD(+).

It belongs to the glyceraldehyde-3-phosphate dehydrogenase family. Homotetramer.

Its subcellular location is the cytoplasm. It catalyses the reaction D-glyceraldehyde 3-phosphate + phosphate + NADP(+) = (2R)-3-phospho-glyceroyl phosphate + NADPH + H(+). The enzyme catalyses D-glyceraldehyde 3-phosphate + phosphate + NAD(+) = (2R)-3-phospho-glyceroyl phosphate + NADH + H(+). The protein operates within carbohydrate degradation; glycolysis; pyruvate from D-glyceraldehyde 3-phosphate: step 1/5. The chain is Glyceraldehyde-3-phosphate dehydrogenase from Methanosarcina mazei (strain ATCC BAA-159 / DSM 3647 / Goe1 / Go1 / JCM 11833 / OCM 88) (Methanosarcina frisia).